A 137-amino-acid polypeptide reads, in one-letter code: MATNKSIKSVVICVLILGLVLEQVQVEGKSCCKNTTGRNCYNACHFAGGSRPVCATACGCKIISGPTCPRDYPKLNLLPESGEPNATEYCTIGCRTSVCDNMDNVSRGQEMKFDMGLCSNACARFCNDGDVIQSVEA.

Positions 1-28 (MATNKSIKSVVICVLILGLVLEQVQVEG) are cleaved as a signal peptide. Intrachain disulfides connect Cys31–Cys68, Cys32–Cys60, Cys40–Cys58, and Cys44–Cys54. A propeptide spans 75–137 (LNLLPESGEP…DGDVIQSVEA (63 aa)) (acidic domain).

It belongs to the plant thionin (TC 1.C.44) family. 4 C-C subfamily.

The protein resides in the secreted. In terms of biological role, thionins are small plant proteins which are toxic to animal cells. They seem to exert their toxic effect at the level of the cell membrane. Their precise function is not known. The chain is Probable leaf thionin from Hordeum vulgare (Barley).